The chain runs to 39 residues: Anthranilate phosphoribosyltransferase (39 aa).

This sequence belongs to the anthranilate phosphoribosyltransferase family. As to quaternary structure, homodimer.

The catalysed reaction is N-(5-phospho-beta-D-ribosyl)anthranilate + diphosphate = 5-phospho-alpha-D-ribose 1-diphosphate + anthranilate. The protein operates within amino-acid biosynthesis; L-tryptophan biosynthesis; L-tryptophan from chorismate: step 2/5. Functionally, catalyzes the transfer of the phosphoribosyl group of 5-phosphorylribose-1-pyrophosphate (PRPP) to anthranilate to yield N-(5'-phosphoribosyl)-anthranilate (PRA). The protein is Anthranilate phosphoribosyltransferase (trpD) of Pectobacterium carotovorum (Erwinia carotovora).